The following is a 471-amino-acid chain: Membrane-associated sulfotransferase kil1 (471 aa).

The Cytoplasmic segment spans residues 1 to 12 (MSTTSMILTKKN). Residues 13 to 33 (IIILSIIIITIIAYQFYITSP) traverse the membrane as a helical; Signal-anchor for type II membrane protein segment. The Lumenal segment spans residues 34–471 (QSFPSSNTIT…LLNRDFKWQN (438 aa)). The N-linked (GlcNAc...) asparagine glycan is linked to N47. 2 stretches are compositionally biased toward low complexity: residues 89 to 105 (NQNE…NNNK) and 112 to 127 (NNNN…NNNN). Residues 89-127 (NQNENQNQINNEYNNNKLNDEQENNNNNNYNNNNNNNNN) are disordered. Residues 167–172 (KSGTTF), R252, and S260 each bind 3'-phosphoadenylyl sulfate. 2 N-linked (GlcNAc...) asparagine glycosylation sites follow: N324 and N344. A 3'-phosphoadenylyl sulfate-binding site is contributed by Y348.

It belongs to the sulfotransferase 1 family.

The protein resides in the membrane. Functionally, sulfotransferase involved in intracellular killing of bacteria. The protein is Membrane-associated sulfotransferase kil1 (kil1) of Dictyostelium discoideum (Social amoeba).